Reading from the N-terminus, the 346-residue chain is NADH-ubiquinone oxidoreductase chain 2 (346 aa).

Transmembrane regions (helical) follow at residues 1-21 (MNPH…TITI), 25-45 (HWVL…PLIS), 60-80 (FLTQ…NAWA), 95-115 (CLLL…HFWF), 124-144 (LMTA…LLLM), 149-169 (LNPA…GWMG), 178-195 (ILAF…IILV), 200-219 (LALL…FMAL), 242-262 (ATLM…GFMP), 274-294 (EMTP…FFYL), and 326-346 (AILA…HAIV).

Belongs to the complex I subunit 2 family.

The protein localises to the mitochondrion inner membrane. The catalysed reaction is a ubiquinone + NADH + 5 H(+)(in) = a ubiquinol + NAD(+) + 4 H(+)(out). Functionally, core subunit of the mitochondrial membrane respiratory chain NADH dehydrogenase (Complex I) that is believed to belong to the minimal assembly required for catalysis. Complex I functions in the transfer of electrons from NADH to the respiratory chain. The immediate electron acceptor for the enzyme is believed to be ubiquinone. The polypeptide is NADH-ubiquinone oxidoreductase chain 2 (MT-ND2) (Anas acuta (Northern pintail)).